The chain runs to 220 residues: N-(5'-phosphoribosyl)anthranilate isomerase (220 aa).

It belongs to the TrpF family.

The catalysed reaction is N-(5-phospho-beta-D-ribosyl)anthranilate = 1-(2-carboxyphenylamino)-1-deoxy-D-ribulose 5-phosphate. The protein operates within amino-acid biosynthesis; L-tryptophan biosynthesis; L-tryptophan from chorismate: step 3/5. This is N-(5'-phosphoribosyl)anthranilate isomerase from Xylella fastidiosa (strain M23).